The following is a 75-amino-acid chain: uncharacterized protein (75 aa).

A helical membrane pass occupies residues 44–64; that stretch reads IINMIVIWAALIALFVKLYIL.

It localises to the host membrane. This is an uncharacterized protein from Ostreid herpesvirus 1 (isolate France) (OsHV-1).